We begin with the raw amino-acid sequence, 160 residues long: Putative pre-16S rRNA nuclease (160 aa).

The protein belongs to the YqgF nuclease family.

Its subcellular location is the cytoplasm. Could be a nuclease involved in processing of the 5'-end of pre-16S rRNA. This is Putative pre-16S rRNA nuclease from Gluconobacter oxydans (strain 621H) (Gluconobacter suboxydans).